The following is a 503-amino-acid chain: Zinc finger and BTB domain-containing protein 37 (503 aa).

Residues 32 to 96 (CDIVVNVQGQ…CYTGRICLQL (65 aa)) form the BTB domain. Disordered stretches follow at residues 140-206 (QTRT…SDVE) and 280-344 (GHGS…QVEE). A compositionally biased stretch (basic and acidic residues) spans 144 to 154 (KHQERPPESHR). Residues 155–167 (VTPNLNRSLSPRH) show a composition bias toward polar residues. Positions 319–336 (TERHRARSESPGRMDEPK) are enriched in basic and acidic residues. C2H2-type zinc fingers lie at residues 373–395 (LTCI…MRLH), 401–423 (FVCR…IRKH), and 429–452 (FHCH…RKNH). The disordered stretch occupies residues 457-503 (PLEGPHSISPETTVTSRGQAEEESPSQEETVAPGEAVQGSVSTTGPD). The span at 465–474 (SPETTVTSRG) shows a compositional bias: polar residues.

The protein localises to the nucleus. Its function is as follows. May be involved in transcriptional regulation. The protein is Zinc finger and BTB domain-containing protein 37 (ZBTB37) of Homo sapiens (Human).